The primary structure comprises 781 residues: Catenin beta-1 (781 aa).

Ala-2 is subject to N-acetylalanine. Residues 2-23 (ATQADLMELDMAMEPDRKAAVS) form an interaction with VCL region. Ser-23 carries the phosphoserine; by GSK3-beta; alternate modification. An O-linked (GlcNAc) serine; alternate glycan is attached at Ser-23. Residue Ser-29 is modified to Phosphoserine; by GSK3-beta. 2 positions are modified to phosphoserine; by GSK3-beta and HIPK2: Ser-33 and Ser-37. The interval 34–57 (GIHSGATTTAPSLSGKGNPEEEDV) is disordered. Phosphothreonine; by GSK3-beta is present on Thr-41. At Ser-45 the chain carries Phosphoserine. An N6-acetyllysine modification is found at Lys-49. The residue at position 64 (Tyr-64) is a Phosphotyrosine; by PTK6. Tyr-142 carries the post-translational modification Phosphotyrosine; by FYN and PTK6. ARM repeat units lie at residues 151–191 (RAIP…IMRS), 193–234 (QMVS…IFKS), 235–276 (GGIP…VRLA), 277–318 (GGLQ…ILAS), 319–360 (GGPQ…IVEA), 361–389 (GGMQ…RNLS), 400–441 (GLLG…VCQV), 442–484 (GGIE…AQNA), 489–530 (YGLP…LREQ), 531–571 (GAIP…EIVE), 594–636 (NTIP…AEGA), and 637–666 (TAPL…SEDK). Positions 156-178 (LTKLLNDEDQVVVNKAAVMVHQL) are interaction with BCL9. Ser-191 is modified (phosphoserine). Ser-246 is subject to Phosphoserine; by CDK5. Phosphotyrosine is present on residues Tyr-331 and Tyr-333. The residue at position 552 (Ser-552) is a Phosphoserine; by AMPK. Thr-556 carries the post-translational modification Phosphothreonine. Residue Cys-619 is modified to S-nitrosocysteine. A Phosphoserine modification is found at Ser-675. Residues 720 to 781 (HSGGYGQDAL…NQLAWFDTDL (62 aa)) form a disordered region. Positions 734-745 (MMEHEMGGHHPG) are enriched in basic and acidic residues. Residues 772–781 (NQLAWFDTDL) form an interaction with SCRIB region.

This sequence belongs to the beta-catenin family. Two separate complex-associated pools are found in the cytoplasm. The majority is present as component of an E-cadherin/ catenin adhesion complex composed of at least E-cadherin/CDH1 and beta-catenin/CTNNB1, and possibly alpha-catenin/CTNNA1; the complex is located to adherens junctions. The stable association of CTNNA1 is controversial as CTNNA1 was shown not to bind to F-actin when assembled in the complex. Alternatively, the CTNNA1-containing complex may be linked to F-actin by other proteins such as LIMA1. Binds NHERF1. Interacts with PTPRU (via the cytoplasmic juxtamembrane domain) and with EMD. Interacts with SESTD1 and TRPC4. Interacts with CAV1. Interacts with PTPRJ. Interacts with PKT7. Interacts with FAT1 (via the cytoplasmic domain). Interacts with CDK2, NDRG2 and NANOS1. Interacts with NEK2 and CDK5. Interacts with CARM1, CXADR, PCDH11Y and PTK6. Interacts with RAPGEF2. Interacts with SOX7; this interaction may lead to proteasomal degradation of active CTNNB1 and thus inhibition of Wnt/beta-catenin-stimulated transcription. Identified in a complex with HINT1 and MITF. Interacts with FHIT. Interacts with FERMT2. Identified in a complex with TCF4 and FERMT2. Another cytoplasmic pool is part of a large complex containing AXIN1, AXIN2, APC, CSNK1A1 and GSK3B that promotes phosphorylation on N-terminal Ser and Thr residues and ubiquitination of CTNNB1 via BTRC and its subsequent degradation by the proteasome. Wnt-dependent activation of DVL antagonizes the action of GSK3B. When GSK3B activity is inhibited the complex dissociates, CTNNB1 is dephosphorylated and is no longer targeted for destruction. The stabilized protein translocates to the nucleus, where it binds TCF/LEF-1 family members, BCL9, BCL9L and possibly also RUVBL1 and CHD8. Interacts with TAX1BP3 (via the PDZ domain); this interaction inhibits the transcriptional activity of CTNNB1. Interacts with AJAP1, BAIAP1 and CTNNA3. Interacts with TRPV4; the TRPV4 and CTNNB1 complex can interact with CDH1. Interacts with VCL. The CTNNB1 and TCF4 complex interacts with PML. Interacts with XIRP1. Binds CTNNBIP and EP300. CTNNB1 forms a ternary complex with LEF1 and EP300 that is disrupted by CTNNBIP1 binding. Interacts directly with AXIN1; the interaction is regulated by CDK2 phosphorylation of AXIN1. Interacts with GLIS2. Interacts with SCRIB. Interacts with TNIK and TCF7L2. Interacts with SLC30A9. Interacts with RORA. May interact with P-cadherin/CDH3. Interacts with RNF220. Interacts with CTNND2. Interacts (via the C-terminal region) with CBY1. The complex composed, at least, of APC, CTNNB1 and GSK3B interacts with JPT1; the interaction requires the inactive form of GSK3B (phosphorylated at 'Ser-9'). Interacts with DLG5. Interacts with FAM53B; promoting translocation to the nucleus. Interacts with TMEM170B. Interacts with AHI1. Interacts with GID8. Component of an cadherin:catenin adhesion complex composed of at least of CDH26, beta-catenin/CTNNB1, alpha-catenin/CTNNA1 and p120 catenin/CTNND1. Forms a complex comprising APPL1, RUVBL2, APPL2, HDAC1 and HDAC2. Interacts with IRF2BPL; mediates the ubiquitination and degradation of CTNNB1. Interacts with AMFR. Interacts with LMBR1L. Interacts with SOX30; prevents interaction of CTNNB1 with TCF7L2/TCF4 and leads to inhibition of Wnt signaling. Interacts with SOX9; inhibiting CTNNB1 activity by competing with the binding sites of TCF/LEF within CTNNB1, thereby inhibiting the Wnt signaling. Interacts with SPN/CD43 cytoplasmic tail. Interacts (when phosphorylated at Tyr-333) with isoform M2 of PKM (PKM2); promoting transcription activation. Interacts with PKP2 (via HEAD domain). Interacts with CDH1. Interacts (when unphosphorylated) with FLYWCH1, perhaps preventing interaction of CTNNB1 with TCF4, and thereby regulating transcription activation; phosphorylation of CTNNB1 may inhibit the interaction. Interacts (via the central armadillo domains) with probable transcriptional regulator ADNP (via N-terminal region); interaction is direct and stabilizes CTNNB1 by modulating its phosphorylation by glycogen synthase kinase-3 beta GSK3B. Interacts with NR5A2. Interacts with DSG2; the interaction promotes localization of CTNNB1 at cell junctions thus reducing its nuclear localization and subsequent transcription of CTNNB1/TCF-target genes. In terms of processing, phosphorylation at Ser-552 by AMPK promotes stabilization of the protein, enhancing TCF/LEF-mediated transcription. Phosphorylation by GSK3B requires prior phosphorylation of Ser-45 by another kinase. Phosphorylation proceeds then from Thr-41 to Ser-37 and Ser-33. Phosphorylated by NEK2. EGF stimulates tyrosine phosphorylation. Phosphorylated on Ser-33 and Ser-37 by HIPK2 and GSK3B, this phosphorylation triggers proteasomal degradation. Phosphorylation on Ser-191 and Ser-246 by CDK5. Phosphorylation by CDK2 regulates insulin internalization. Phosphorylation by PTK6 at Tyr-64, Tyr-142, Tyr-331 and/or Tyr-333 with the predominant site at Tyr-64 is not essential for inhibition of transcriptional activity. Phosphorylation by SRC at Tyr-333 promotes interaction with isoform M2 of PKM (PKM2); promoting transcription activation. Post-translationally, ubiquitinated by the SCF(BTRC) E3 ligase complex when phosphorylated by GSK3B, leading to its degradation. Ubiquitinated by a E3 ubiquitin ligase complex containing UBE2D1, SIAH1, CACYBP/SIP, SKP1, APC and TBL1X, leading to its subsequent proteasomal degradation. Ubiquitinated and degraded following interaction with SOX9. Ubiquitinated via 'Lys-11'- and 'Lys-29'-linked ubiquitin chains by UBR5, leading to its stabilization. S-nitrosylation at Cys-619 within adherens junctions promotes VEGF-induced, NO-dependent endothelial cell permeability by disrupting interaction with E-cadherin, thus mediating disassembly adherens junctions. In terms of processing, O-glycosylation at Ser-23 decreases nuclear localization and transcriptional activity, and increases localization to the plasma membrane and interaction with E-cadherin CDH1. Post-translationally, deacetylated at Lys-49 by SIRT1. As to expression, expressed in cerebellar granule neurons (at protein level). Expressed in the intestinal epithelium (at protein level). Abundantly expressed in the tooth, skin, lung, kidney, eye and brain with weak expression in the liver and heart.

Its subcellular location is the cytoplasm. It is found in the nucleus. The protein localises to the cytoskeleton. The protein resides in the cell junction. It localises to the adherens junction. Its subcellular location is the cell membrane. It is found in the microtubule organizing center. The protein localises to the centrosome. The protein resides in the spindle pole. It localises to the synapse. Its subcellular location is the cilium basal body. Its function is as follows. Key downstream component of the canonical Wnt signaling pathway. In the absence of Wnt, forms a complex with AXIN1, AXIN2, APC, CSNK1A1 and GSK3B that promotes phosphorylation on N-terminal Ser and Thr residues and ubiquitination of CTNNB1 via BTRC and its subsequent degradation by the proteasome. In the presence of Wnt ligand, CTNNB1 is not ubiquitinated and accumulates in the nucleus, where it acts as a coactivator for transcription factors of the TCF/LEF family, leading to activate Wnt responsive genes. Also acts as a coactivator for other transcription factors, such as NR5A2. Promotes epithelial to mesenchymal transition/mesenchymal to epithelial transition (EMT/MET) via driving transcription of CTNNB1/TCF-target genes. Involved in the regulation of cell adhesion, as component of an E-cadherin:catenin adhesion complex. Acts as a negative regulator of centrosome cohesion. Involved in the CDK2/PTPN6/CTNNB1/CEACAM1 pathway of insulin internalization. Blocks anoikis of malignant kidney and intestinal epithelial cells and promotes their anchorage-independent growth by down-regulating DAPK2. Disrupts PML function and PML-NB formation by inhibiting RANBP2-mediated sumoylation of PML. Promotes neurogenesis by maintaining sympathetic neuroblasts within the cell cycle. Involved in chondrocyte differentiation via interaction with SOX9: SOX9-binding competes with the binding sites of TCF/LEF within CTNNB1, thereby inhibiting the Wnt signaling. Acts as a positive regulator of odontoblast differentiation during mesenchymal tooth germ formation, via promoting the transcription of differentiation factors such as LEF1, BMP2 and BMP4. Activity is repressed in a MSX1-mediated manner at the bell stage of mesenchymal tooth germ formation which prevents premature differentiation of odontoblasts. The polypeptide is Catenin beta-1 (Mus musculus (Mouse)).